The chain runs to 224 residues: UPF0758 protein PSPTO_0086 (224 aa).

In terms of domain architecture, MPN spans 102-224; sequence ALENPAQVRN…PLSMVEKGLM (123 aa). Residues H173, H175, and D186 each coordinate Zn(2+). Residues 173–186 carry the JAMM motif motif; the sequence is HNHPSGITTPSRSD.

It belongs to the UPF0758 family.

The protein is UPF0758 protein PSPTO_0086 of Pseudomonas syringae pv. tomato (strain ATCC BAA-871 / DC3000).